The primary structure comprises 556 residues: MNVLEQTEQKLKEQIHHAVIHAELATEDQVPDIILEKPKDKAHGDFATNIAMQLARVAKKAPRQIADDIASKLNKSEASVEKVEIAGPGFINFFMKQDFLGEVIDTVLSAGDNYGKSTGGNGEKVQVEFVSVNPTGDLHLGHARNAAFGDVLCNVFAAAGYEVEREYYINDAGNQINNLGLSVEARYLQEIGQDVDMPEDGYQGQAIIEIAKELVKKDGEKWADKDHEERLDFFKEYGLKASLRNIESDLKDFRVEFDHWFSERSLFKDGQIDDTLAVLDDGGYTFEKDGALWFKTTEFGDDKDRVLIKGDGNYTYLTPDIAYHKNKLDRGFDRIINVWGSDHHGYIPRMRAALQALGYPVEKFDVKIIQMVNLFEAGEKVKMSKRTGKAVSLRELMDEVGIDAVRYYFVARSNDSQLDFDMDLAKSQSNDNPVYYAQYAHARICTMLSQAKSKGFNTEAEFDASLLTAEKELDLLKKIGELPQMIVDAADKHTPHKVTQYIFELATLLHSFYNAEKVLDADNEARTHARIALMKAVRQTLANAMTIIGISAPEKM.

Residues 132-142 (VNPTGDLHLGH) carry the 'HIGH' region motif.

The protein belongs to the class-I aminoacyl-tRNA synthetase family. In terms of assembly, monomer.

It localises to the cytoplasm. The catalysed reaction is tRNA(Arg) + L-arginine + ATP = L-arginyl-tRNA(Arg) + AMP + diphosphate. This chain is Arginine--tRNA ligase, found in Oceanobacillus iheyensis (strain DSM 14371 / CIP 107618 / JCM 11309 / KCTC 3954 / HTE831).